A 333-amino-acid polypeptide reads, in one-letter code: GTP 3',8-cyclase (333 aa).

One can recognise a Radical SAM core domain in the interval 7–221 (KFGRVHDYIR…FEACNEAGYE (215 aa)). R16 is a binding site for GTP. C23 and C27 together coordinate [4Fe-4S] cluster. Y29 contacts S-adenosyl-L-methionine. C30 provides a ligand contact to [4Fe-4S] cluster. R66 provides a ligand contact to GTP. G70 is a binding site for S-adenosyl-L-methionine. T97 is a GTP binding site. S121 contributes to the S-adenosyl-L-methionine binding site. K158 serves as a coordination point for GTP. An S-adenosyl-L-methionine-binding site is contributed by M192. [4Fe-4S] cluster-binding residues include C257 and C260. 262–264 (RLR) contacts GTP. C274 lines the [4Fe-4S] cluster pocket.

The protein belongs to the radical SAM superfamily. MoaA family. As to quaternary structure, monomer and homodimer. [4Fe-4S] cluster is required as a cofactor.

The catalysed reaction is GTP + AH2 + S-adenosyl-L-methionine = (8S)-3',8-cyclo-7,8-dihydroguanosine 5'-triphosphate + 5'-deoxyadenosine + L-methionine + A + H(+). It functions in the pathway cofactor biosynthesis; molybdopterin biosynthesis. In terms of biological role, catalyzes the cyclization of GTP to (8S)-3',8-cyclo-7,8-dihydroguanosine 5'-triphosphate. This Listeria monocytogenes serovar 1/2a (strain ATCC BAA-679 / EGD-e) protein is GTP 3',8-cyclase.